Here is a 1401-residue protein sequence, read N- to C-terminus: DNA-directed RNA polymerase subunit beta'' (1401 aa).

C224, C295, C302, and C305 together coordinate Zn(2+).

This sequence belongs to the RNA polymerase beta' chain family. RpoC2 subfamily. In plastids the minimal PEP RNA polymerase catalytic core is composed of four subunits: alpha, beta, beta', and beta''. When a (nuclear-encoded) sigma factor is associated with the core the holoenzyme is formed, which can initiate transcription. It depends on Zn(2+) as a cofactor.

Its subcellular location is the plastid. The protein resides in the chloroplast. The catalysed reaction is RNA(n) + a ribonucleoside 5'-triphosphate = RNA(n+1) + diphosphate. Functionally, DNA-dependent RNA polymerase catalyzes the transcription of DNA into RNA using the four ribonucleoside triphosphates as substrates. In Ipomoea purpurea (Common morning glory), this protein is DNA-directed RNA polymerase subunit beta''.